Consider the following 137-residue polypeptide: uncharacterized protein (137 aa).

The next 4 helical transmembrane spans lie at 14 to 34, 48 to 68, 84 to 104, and 109 to 129; these read AVVV…GSIS, YHII…SLSI, FFTI…LGLT, and HIPS…LNLF.

The protein localises to the cell membrane. This is an uncharacterized protein from Methanocaldococcus jannaschii (strain ATCC 43067 / DSM 2661 / JAL-1 / JCM 10045 / NBRC 100440) (Methanococcus jannaschii).